The primary structure comprises 948 residues: Protocadherin alpha-2 (948 aa).

Positions 1–22 are cleaved as a signal peptide; the sequence is MASSIRRGLGAWTRLLSLLLLA. Topologically, residues 23–697 are extracellular; that stretch reads AWEVGSGQLR…GSEATLVDVN (675 aa). 6 Cadherin domains span residues 30–133, 157–242, 243–350, 351–455, 456–565, and 588–678; these read QLRY…PPVF, ASDA…EPTF, AQSV…TPEV, SITS…APAF, AQPE…APAL, and GHVV…APKA. 4 N-linked (GlcNAc...) asparagine glycosylation sites follow: asparagine 257, asparagine 265, asparagine 362, and asparagine 548. The helical transmembrane segment at 698–718 threads the bilayer; that stretch reads VYLIIAICAVSSLLVLTVLLY. Topologically, residues 719 to 948 are cytoplasmic; sequence TALRCSVPAT…GNSTTDNSDQ (230 aa). A PXXP 1 repeat occupies 734-737; sequence PGKP. Positions 734 to 892 are 5 X 4 AA repeats of P-X-X-P; sequence PGKPTLVCSS…PDKFIIPGSP (159 aa). Disordered stretches follow at residues 755 to 801, 829 to 854, and 868 to 948; these read RQRV…RQPN, GPGG…EVSP, and KYGP…NSDQ. Positions 783 to 795 are enriched in basic and acidic residues; that stretch reads AEEKQLSESEYVG. 4 PXXP repeats span residues 797–800, 830–833, 871–874, and 889–892; these read PRQP, PGGP, PGNP, and PGSP. Residues 907 to 921 are compositionally biased toward basic and acidic residues; sequence DKSDFITFGKKEETK.

Its subcellular location is the cell membrane. In terms of biological role, potential calcium-dependent cell-adhesion protein. May be involved in the establishment and maintenance of specific neuronal connections in the brain. This is Protocadherin alpha-2 (PCDHA2) from Pan troglodytes (Chimpanzee).